Here is a 612-residue protein sequence, read N- to C-terminus: MNQEEMLDRQKHIRNFSIIAHIDHGKSTLADRILELTDTIAKRDMQAQVLDDMALERERGITIKLNAVELHYKAKNGETYIFHLIDTPGHVDFSYEVSRSLAACEGALLVVDATQGVEAQTLANVYLAIDDDLEIIPVINKVDLPSAQPDVVKEEIEEMIGLDASDAILASGKTGLGVPEILERIVTDVPAPSGDLNAPLQALIFDSVYDDYRGVVLDVRVKEGQVKVGDTIQLMSNGKQFQVTEVGVMSPKAVKRDFLMVGDVGYITAAIKTIQDTRVGDTVTLADRPAEKPLKGYRKITPMVYSGLFPVDNAKFNDLREALEKLQLNDAALEFEPETSQALGFGFRCGFLGLLHMDVVQERLERDYDLDLIMTAPSVDYEIIMTDGTEKTIDNPADMPEVSEIKEIREPYVKASIMVPNDYVGPVMELSQRKRGEFVTMDYLDKYRVNVIYNLPLSEIIYDFFDDLKSSTKGYASLDYEITGYRQSDLVKMDILLNGDPVDALSTIVHKDFAYERGKAIVARLKTTIPRQQFEIPIQAAIGNKVIARSTVKAYRKNVLAKCYGGDITRKRKLLEKQKAGKKRMKSVGSVEVPQEAFMSILKMNDEESQGK.

The tr-type G domain occupies 11 to 193 (KHIRNFSIIA…RIVTDVPAPS (183 aa)). GTP is bound by residues 23-28 (DHGKST) and 140-143 (NKVD).

It belongs to the TRAFAC class translation factor GTPase superfamily. Classic translation factor GTPase family. LepA subfamily.

It is found in the cell membrane. It catalyses the reaction GTP + H2O = GDP + phosphate + H(+). Required for accurate and efficient protein synthesis under certain stress conditions. May act as a fidelity factor of the translation reaction, by catalyzing a one-codon backward translocation of tRNAs on improperly translocated ribosomes. Back-translocation proceeds from a post-translocation (POST) complex to a pre-translocation (PRE) complex, thus giving elongation factor G a second chance to translocate the tRNAs correctly. Binds to ribosomes in a GTP-dependent manner. In Lacticaseibacillus paracasei (strain ATCC 334 / BCRC 17002 / CCUG 31169 / CIP 107868 / KCTC 3260 / NRRL B-441) (Lactobacillus paracasei), this protein is Elongation factor 4.